Here is a 249-residue protein sequence, read N- to C-terminus: Meiotic drive suppressor wtf25 (249 aa).

A disordered region spans residues 1–40; sequence MKNNYTSLKSPLDEEDELKTDHEIDLEKGPLPEYDSEEEG. Basic and acidic residues predominate over residues 19-30; sequence KTDHEIDLEKGP. Helical transmembrane passes span 73–93, 110–130, 151–170, and 187–207; these read LLIILLISFTSIILFNAPAFC, WTLFGFWCLVCTLALIFLTYF, NMIFAFCKSSLFCLVLLKAE, and SASAFTFMAVSSILIFIAETV.

This sequence belongs to the WTF family. Homomer. Interacts with other proteins that exhibit high sequence similarity.

The protein resides in the spore membrane. The protein localises to the vacuole membrane. In terms of biological role, acts as a suppressor component of the dual wtf meiotic drive system, and can suppress but not confer meiotic drive by compatible poisons. Wtf meiotic drive systems promote unequal transmission of alleles from the parental zygote to progeny spores by encoding a poison and an antidote from the same locus; the poison is trans-acting and forms toxic aggregates in all spores within an ascus, wherease the antidote is spore-specific and targets aggregates for degradation by the vacuole. Meiotic drive by wtf systems therefore lead to poisoning of all progeny that do not inherit the dual poison/antidote allele, or express a compatible antidote. This Schizosaccharomyces pombe (strain 972 / ATCC 24843) (Fission yeast) protein is Meiotic drive suppressor wtf25.